Reading from the N-terminus, the 236-residue chain is Rab-like protein 3 (236 aa).

Positions 1-236 are small GTPase-like; the sequence is MASLDRVKVL…GGTLKSLHYD (236 aa). Residues 16 to 21, 148 to 150, and 179 to 180 contribute to the GTP site; these read GVGKSS, KLD, and DC.

The protein belongs to the small GTPase superfamily. Rab family. As to quaternary structure, homodimer. Interacts with GPR89; the interaction stabilizes GPR89. Interacts with RAP1GDS1.

Its function is as follows. Required for KRAS signaling regulation and modulation of cell proliferation. Regulator of KRAS prenylation, and probably prenylation of other small GTPases. Required for lymphocyte development and function. Not required for myeloid cell development. The sequence is that of Rab-like protein 3 (RABL3) from Bos taurus (Bovine).